Here is a 91-residue protein sequence, read N- to C-terminus: RNA-binding protein Hfq (91 aa).

Positions 9–68 (DPFLNALRRERVPVSIYLVNGIKLQGQVESFDQFVILLKNTVSQMVYKHAISTVVPSRPF) constitute a Sm domain. The segment at 66–91 (RPFNVGSHQGGSSNYNAQQDDSAGEQ) is disordered. The span at 71–91 (GSHQGGSSNYNAQQDDSAGEQ) shows a compositional bias: polar residues.

Belongs to the Hfq family. As to quaternary structure, homohexamer.

Functionally, RNA chaperone that binds small regulatory RNA (sRNAs) and mRNAs to facilitate mRNA translational regulation in response to envelope stress, environmental stress and changes in metabolite concentrations. Also binds with high specificity to tRNAs. This chain is RNA-binding protein Hfq, found in Shewanella amazonensis (strain ATCC BAA-1098 / SB2B).